Consider the following 606-residue polypeptide: Sulfite reductase [NADPH] flavoprotein alpha-component (606 aa).

Residues 68 to 206 (ITILSASQTG…AAEAWRKEVT (139 aa)) form the Flavodoxin-like domain. FMN-binding positions include 74 to 79 (SQTGNA), 121 to 124 (STQG), and 157 to 166 (LGDITYEHFA). Residues 240–454 (ESPLTATLSV…VEHNDNFRLP (215 aa)) enclose the FAD-binding FR-type domain. Residues T328, Q362, 392 to 395 (RLYS), 410 to 412 (TVG), Y416, and 425 to 428 (GGAS) each bind FAD. NADP(+) is bound by residues 525 to 526 (SR), 531 to 535 (KVYVQ), and D568. Y606 lines the FAD pocket.

It belongs to the NADPH-dependent sulphite reductase flavoprotein subunit CysJ family. The protein in the N-terminal section; belongs to the flavodoxin family. This sequence in the C-terminal section; belongs to the flavoprotein pyridine nucleotide cytochrome reductase family. Alpha(8)-beta(8). The alpha component is a flavoprotein, the beta component is a hemoprotein. FAD is required as a cofactor. FMN serves as cofactor.

It carries out the reaction hydrogen sulfide + 3 NADP(+) + 3 H2O = sulfite + 3 NADPH + 4 H(+). It functions in the pathway sulfur metabolism; hydrogen sulfide biosynthesis; hydrogen sulfide from sulfite (NADPH route): step 1/1. In terms of biological role, component of the sulfite reductase complex that catalyzes the 6-electron reduction of sulfite to sulfide. This is one of several activities required for the biosynthesis of L-cysteine from sulfate. The flavoprotein component catalyzes the electron flow from NADPH -&gt; FAD -&gt; FMN to the hemoprotein component. The sequence is that of Sulfite reductase [NADPH] flavoprotein alpha-component from Zymomonas mobilis subsp. mobilis (strain ATCC 31821 / ZM4 / CP4).